The chain runs to 245 residues: Ribonuclease 3 (245 aa).

Residues 24–146 (YTVFSQKLGY…IIGAIYLESG (123 aa)) form the RNase III domain. E59 contributes to the Mg(2+) binding site. Residue D63 is part of the active site. N132 and E135 together coordinate Mg(2+). The active site involves E135. Residues 173 to 243 (DPKTLLQEYL…ARRAYKLAVV (71 aa)) form the DRBM domain.

This sequence belongs to the ribonuclease III family. As to quaternary structure, homodimer. Requires Mg(2+) as cofactor.

It localises to the cytoplasm. The catalysed reaction is Endonucleolytic cleavage to 5'-phosphomonoester.. Its function is as follows. Digests double-stranded RNA. Involved in the processing of primary rRNA transcript to yield the immediate precursors to the large and small rRNAs (23S and 16S). Processes some mRNAs, and tRNAs when they are encoded in the rRNA operon. Processes pre-crRNA and tracrRNA of type II CRISPR loci if present in the organism. The polypeptide is Ribonuclease 3 (Nitrosomonas eutropha (strain DSM 101675 / C91 / Nm57)).